A 274-amino-acid chain; its full sequence is 2,3,4,5-tetrahydropyridine-2,6-dicarboxylate N-succinyltransferase (274 aa).

Substrate contacts are provided by R104 and D141.

Belongs to the transferase hexapeptide repeat family. As to quaternary structure, homotrimer.

The protein localises to the cytoplasm. It carries out the reaction (S)-2,3,4,5-tetrahydrodipicolinate + succinyl-CoA + H2O = (S)-2-succinylamino-6-oxoheptanedioate + CoA. It functions in the pathway amino-acid biosynthesis; L-lysine biosynthesis via DAP pathway; LL-2,6-diaminopimelate from (S)-tetrahydrodipicolinate (succinylase route): step 1/3. The sequence is that of 2,3,4,5-tetrahydropyridine-2,6-dicarboxylate N-succinyltransferase from Idiomarina loihiensis (strain ATCC BAA-735 / DSM 15497 / L2-TR).